Reading from the N-terminus, the 214-residue chain is Thymidylate kinase (214 aa).

Position 7–14 (7–14) interacts with ATP; it reads GVDGAGKR. DTMP contacts are provided by D9, Y39, F70, R74, R95, N100, and Y103. D9 contacts Mg(2+). Residues 147-159 are LID; sequence GERSRGRAQRDPG. Residues D163 and Y165 each coordinate dTMP. Residue E166 participates in Mg(2+) binding.

It belongs to the thymidylate kinase family. As to quaternary structure, homodimer. The cofactor is Mg(2+).

The enzyme catalyses dTMP + ATP = dTDP + ADP. It functions in the pathway pyrimidine metabolism; dTTP biosynthesis. Its function is as follows. Catalyzes the reversible phosphorylation of deoxythymidine monophosphate (dTMP) to deoxythymidine diphosphate (dTDP), using ATP as its preferred phosphoryl donor. Situated at the junction of both de novo and salvage pathways of deoxythymidine triphosphate (dTTP) synthesis, is essential for DNA synthesis and cellular growth. The chain is Thymidylate kinase (tmk) from Mycobacterium tuberculosis (strain CDC 1551 / Oshkosh).